The following is a 154-amino-acid chain: Urease subunit alpha (154 aa).

Positions 38–154 (GGIDTHIHFI…ADEMDIQVAI (117 aa)) constitute a Urease domain. Residues His43, His45, and Lys126 each contribute to the Ni(2+) site. Residue Lys126 is modified to N6-carboxylysine. His128 is a substrate binding site.

This sequence belongs to the metallo-dependent hydrolases superfamily. Urease alpha subunit family. As to quaternary structure, heterotrimer of UreA (gamma), UreB (beta) and UreC (alpha) subunits. Three heterotrimers associate to form the active enzyme. It depends on Ni cation as a cofactor. Post-translationally, carboxylation allows a single lysine to coordinate two nickel ions.

The protein localises to the cytoplasm. It carries out the reaction urea + 2 H2O + H(+) = hydrogencarbonate + 2 NH4(+). It participates in nitrogen metabolism; urea degradation; CO(2) and NH(3) from urea (urease route): step 1/1. The chain is Urease subunit alpha (ureC) from Photobacterium damselae subsp. damselae (Listonella damsela).